We begin with the raw amino-acid sequence, 445 residues long: Tubulin beta-4 chain (445 aa).

The MREI motif signature appears at 1-4 (MREI). Gln-11, Glu-69, Ser-138, Gly-142, Thr-143, Gly-144, Asn-204, and Asn-226 together coordinate GTP. Residue Glu-69 coordinates Mg(2+). The disordered stretch occupies residues 425 to 445 (YQDATAEEEGEFEEGEEEENA). Over residues 429–445 (TAEEEGEFEEGEEEENA) the composition is skewed to acidic residues. The residue at position 438 (Glu-438) is a 5-glutamyl polyglutamate.

The protein belongs to the tubulin family. As to quaternary structure, dimer of alpha and beta chains. A typical microtubule is a hollow water-filled tube with an outer diameter of 25 nm and an inner diameter of 15 nM. Alpha-beta heterodimers associate head-to-tail to form protofilaments running lengthwise along the microtubule wall with the beta-tubulin subunit facing the microtubule plus end conferring a structural polarity. Microtubules usually have 13 protofilaments but different protofilament numbers can be found in some organisms and specialized cells. Mg(2+) serves as cofactor. Post-translationally, some glutamate residues at the C-terminus are polyglycylated, resulting in polyglycine chains on the gamma-carboxyl group. Glycylation is mainly limited to tubulin incorporated into axonemes (cilia and flagella) whereas glutamylation is prevalent in neuronal cells, centrioles, axonemes, and the mitotic spindle. Both modifications can coexist on the same protein on adjacent residues, and lowering polyglycylation levels increases polyglutamylation, and reciprocally. The precise function of polyglycylation is still unclear. Some glutamate residues at the C-terminus are polyglutamylated, resulting in polyglutamate chains on the gamma-carboxyl group. Polyglutamylation plays a key role in microtubule severing by spastin (SPAST). SPAST preferentially recognizes and acts on microtubules decorated with short polyglutamate tails: severing activity by SPAST increases as the number of glutamates per tubulin rises from one to eight, but decreases beyond this glutamylation threshold. Preferential expression in germ cells.

It is found in the cytoplasm. Its subcellular location is the cytoskeleton. Its function is as follows. Tubulin is the major constituent of microtubules, a cylinder consisting of laterally associated linear protofilaments composed of alpha- and beta-tubulin heterodimers. Microtubules grow by the addition of GTP-tubulin dimers to the microtubule end, where a stabilizing cap forms. Below the cap, tubulin dimers are in GDP-bound state, owing to GTPase activity of alpha-tubulin. This Xenopus laevis (African clawed frog) protein is Tubulin beta-4 chain (tubb4).